Here is a 740-residue protein sequence, read N- to C-terminus: Dipeptidyl peptidase family member 6 (740 aa).

Residue methionine 1 is a topological domain, cytoplasmic. Residues 2–22 (LFLPILILNLLIITHAIDIIP) form a helical; Signal-anchor for type II membrane protein membrane-spanning segment. Topologically, residues 23–740 (REVLFQDPKY…VMNRIFPVQG (718 aa)) are lumenal. Asparagine 108, asparagine 308, and asparagine 506 each carry an N-linked (GlcNAc...) asparagine glycan. Residues serine 516, aspartate 604, and histidine 636 each act as charge relay system in the active site. Cysteine 535 and cysteine 658 form a disulfide bridge. Asparagine 672 is a glycosylation site (N-linked (GlcNAc...) asparagine).

This sequence belongs to the peptidase S9B family. DPPIV subfamily.

The protein localises to the cell membrane. Functionally, removes N-terminal dipeptides sequentially from polypeptides. Essential for control of distal tip cell migration. The sequence is that of Dipeptidyl peptidase family member 6 (dpf-6) from Caenorhabditis elegans.